Consider the following 138-residue polypeptide: Actophorin (138 aa).

One can recognise an ADF-H domain in the interval 3-134 (GIQLADEVTS…NLDEVIAKVK (132 aa)).

It belongs to the actin-binding proteins ADF family. Interacts with F-actin. Does not interact with G-actin. Interacts with 14-3-3 protein 3.

Its subcellular location is the cytoplasm. The protein localises to the cytoskeleton. It is found in the cell membrane. The protein resides in the cell projection. It localises to the phagocytic cup. Its subcellular location is the pseudopodium. Its function is as follows. Actin-binding protein that severs actin filaments. This is Actophorin from Entamoeba histolytica (strain ATCC 30459 / HM-1:IMSS / ABRM).